The chain runs to 291 residues: Pyridoxal 5'-phosphate synthase subunit PdxS (291 aa).

Asp23 contributes to the D-ribose 5-phosphate binding site. Catalysis depends on Lys80, which acts as the Schiff-base intermediate with D-ribose 5-phosphate. Gly152 contributes to the D-ribose 5-phosphate binding site. D-glyceraldehyde 3-phosphate is bound at residue Arg164. D-ribose 5-phosphate-binding positions include Gly213 and 234 to 235; that span reads GS.

It belongs to the PdxS/SNZ family. In the presence of PdxT, forms a dodecamer of heterodimers.

The catalysed reaction is aldehydo-D-ribose 5-phosphate + D-glyceraldehyde 3-phosphate + L-glutamine = pyridoxal 5'-phosphate + L-glutamate + phosphate + 3 H2O + H(+). Its pathway is cofactor biosynthesis; pyridoxal 5'-phosphate biosynthesis. In terms of biological role, catalyzes the formation of pyridoxal 5'-phosphate from ribose 5-phosphate (RBP), glyceraldehyde 3-phosphate (G3P) and ammonia. The ammonia is provided by the PdxT subunit. Can also use ribulose 5-phosphate and dihydroxyacetone phosphate as substrates, resulting from enzyme-catalyzed isomerization of RBP and G3P, respectively. The polypeptide is Pyridoxal 5'-phosphate synthase subunit PdxS (Bifidobacterium longum (strain DJO10A)).